The sequence spans 631 residues: UvrABC system protein C (631 aa).

Positions 1–20 (MKNETEAVADQPPKTGPVKP) are disordered. The GIY-YIG domain occupies 34–112 (MSPGVYRMLD…IKQLKPKFNV (79 aa)). Residues 222 to 257 (TDLQRQLADGMAAASEAMEFERAAALRDRIRALTNV) enclose the UVR domain.

Belongs to the UvrC family. As to quaternary structure, interacts with UvrB in an incision complex.

It is found in the cytoplasm. The UvrABC repair system catalyzes the recognition and processing of DNA lesions. UvrC both incises the 5' and 3' sides of the lesion. The N-terminal half is responsible for the 3' incision and the C-terminal half is responsible for the 5' incision. The chain is UvrABC system protein C from Jannaschia sp. (strain CCS1).